The primary structure comprises 65 residues: Hirudin-3B' (65 aa).

The segment at V1–Y3 is interaction with thrombin active site. 3 disulfide bridges follow: C6/C14, C16/C28, and C22/C39. Positions V40–Q65 are disordered. O-linked (GalNAc...) threonine glycosylation occurs at T45. The interval D55 to Q65 is interaction with fibrinogen-binding exosite of thrombin. Residues D55–Q65 are compositionally biased toward acidic residues. Y63 is subject to Sulfotyrosine.

The protein belongs to the protease inhibitor I14 (hirudin) family.

The protein localises to the secreted. Hirudin is a potent thrombin-specific protease inhibitor. It forms a stable non-covalent complex with alpha-thrombin, thereby abolishing its ability to cleave fibrinogen. This chain is Hirudin-3B', found in Hirudo medicinalis (Medicinal leech).